Reading from the N-terminus, the 238-residue chain is NADH-quinone oxidoreductase subunit I (238 aa).

2 consecutive 4Fe-4S ferredoxin-type domains span residues 81 to 111 (LVPREDGRARCVACYMCATACPAQCIYIEAG) and 123 to 152 (VKFVIDELRCIVCGFCVEACPKDAIRMDSG). Positions 91, 94, 97, 101, 132, 135, 138, and 142 each coordinate [4Fe-4S] cluster.

This sequence belongs to the complex I 23 kDa subunit family. In terms of assembly, NDH-1 is composed of 14 different subunits. Subunits NuoA, H, J, K, L, M, N constitute the membrane sector of the complex. Requires [4Fe-4S] cluster as cofactor.

The protein resides in the cell inner membrane. The enzyme catalyses a quinone + NADH + 5 H(+)(in) = a quinol + NAD(+) + 4 H(+)(out). NDH-1 shuttles electrons from NADH, via FMN and iron-sulfur (Fe-S) centers, to quinones in the respiratory chain. The immediate electron acceptor for the enzyme in this species is believed to be ubiquinone. Couples the redox reaction to proton translocation (for every two electrons transferred, four hydrogen ions are translocated across the cytoplasmic membrane), and thus conserves the redox energy in a proton gradient. In Anaeromyxobacter sp. (strain Fw109-5), this protein is NADH-quinone oxidoreductase subunit I.